Here is a 730-residue protein sequence, read N- to C-terminus: Transient receptor potential cation channel subfamily V member 5 (730 aa).

The Cytoplasmic segment spans residues M1–P327. 6 ANK repeats span residues I44–Q74, V78–K107, V116–A145, Y162–A191, L195–H228, and Q239–W268. A helical transmembrane segment spans residues Y328–I348. Residues Y349–R385 lie on the Extracellular side of the membrane. Residue N358 is glycosylated (N-linked (GlcNAc...) asparagine). The helical transmembrane segment at L386 to F408 threads the bilayer. Over R409 to T419 the chain is Cytoplasmic. Residues I420–M442 form a helical membrane-spanning segment. Residues R443–N448 are Extracellular-facing. The chain crosses the membrane as a helical span at residues G449–A469. At R470 to R492 the chain is on the cytoplasmic side. Residues F493–Q513 traverse the membrane as a helical segment. Positions S524 to P544 form an intramembrane region, pore-forming. D542 contacts Ca(2+). A helical membrane pass occupies residues I557 to M577. Residues M578–F730 lie on the Cytoplasmic side of the membrane. The segment at V598–V602 is interaction with S100A10. The segment at A650–C653 is involved in Ca(2+)-dependent inactivation. T685 carries the phosphothreonine modification. S689 is subject to Phosphoserine. The involved in Ca(2+)-dependent inactivation stretch occupies residues G701–F730.

This sequence belongs to the transient receptor (TC 1.A.4) family. TrpV subfamily. TRPV5 sub-subfamily. Homotetramer. Probably forms heterotetramers with TRPV6. Interacts with TRPV6. Interacts with S100A10 and probably with the ANAX2-S100A10 heterotetramer. The interaction with S100A10 is required for the trafficking to the plasma membrane. Interacts with calmodulin. Interacts with BSPRY, which results in its inactivation. In terms of processing, glycosylated. In terms of tissue distribution, detected in kidney cortex, in distal convoluted tubules and cortical collecting ducts (at protein level). Detected in duodenum, jejunum, ileum, kidney and placenta.

It is found in the cell membrane. The protein localises to the apical cell membrane. It catalyses the reaction Ca(2+)(in) = Ca(2+)(out). With respect to regulation, activated by WNK3. In terms of biological role, constitutively active calcium selective cation channel thought to be involved in Ca(2+) reabsorption in kidney and intestine. Required for normal Ca(2+) reabsorption in the kidney distal convoluted tubules. The channel is activated by low internal calcium level and the current exhibits an inward rectification. A Ca(2+)-dependent feedback regulation includes fast channel inactivation and slow current decay. Heteromeric assembly with TRPV6 seems to modify channel properties. TRPV5-TRPV6 heteromultimeric concatemers exhibit voltage-dependent gating. The protein is Transient receptor potential cation channel subfamily V member 5 (Trpv5) of Oryctolagus cuniculus (Rabbit).